The sequence spans 414 residues: Patatin-like protein 1 (414 aa).

One can recognise a PNPLA domain in the interval 22–228; sequence LSLDGGGVRG…TANNPTLVAM (207 aa). The GXGXXG motif lies at 26-31; sequence GGGVRG. The GXSXG signature appears at 64-68; that stretch reads GTSTG. The active-site Nucleophile is S66. The Proton acceptor role is filled by D215. The short motif at 215 to 217 is the DGA/G element; it reads DGA. Residue S399 is modified to Phosphoserine.

Belongs to the patatin family. Post-translationally, phosphorylated at Ser-399 by CPK3. Phosphorylation enhances PLP1 activity towards phosphatidylcholine. In terms of tissue distribution, expressed specifically in roots and root hairs.

It is found in the cytoplasm. Possesses non-specific lipolytic acyl hydrolase (LAH) activity. Catalyzes the hydrolysis of the neutral lipids monogalactosyldiacylglycerol (MGDG), digalactosyldiacylglycerol (DGDG) and phosphatidylglycerol (PG), and less efficiently the polar lipids phosphatidylcholine (PC) and phosphatidylinositol (PI), but not the storage lipid triacylglycerol (TAG). May play a role in root development. The chain is Patatin-like protein 1 (PLP1) from Arabidopsis thaliana (Mouse-ear cress).